Consider the following 204-residue polypeptide: Linker for activation of T-cells family member 2 (204 aa).

Topologically, residues 1–7 are extracellular; the sequence is MNAELEL. The chain crosses the membrane as a helical; Signal-anchor for type III membrane protein span at residues 8 to 28; that stretch reads LWPLSGLLLLLLLGTTAWLCV. 2 S-palmitoyl cysteine lipidation sites follow: cysteine 27 and cysteine 30. At 29–204 the chain is on the cytoplasmic side; sequence QCSRPGVKRN…NGDVATTEKI (176 aa). At tyrosine 60 the chain carries Phosphotyrosine. Phosphoserine occurs at positions 61 and 96. 3 positions are modified to phosphotyrosine: tyrosine 140, tyrosine 161, and tyrosine 193. The interval 147–204 is disordered; the sequence is KPSTPESGTEESEDYQNSVSILQWRESKRTMGARTSPSGSPDEEPDYVNGDVATTEKI.

When phosphorylated, interacts with GRB2. May also interact with SOS1, GAB1 and CBL. In terms of processing, phosphorylated on tyrosines following cross-linking of BCR in B-cells, high affinity IgG receptor (FCGR1) in myeloid cells, or high affinity IgE receptor (FCER1) in mast cells; which induces the recruitment of GRB2.

The protein localises to the cell membrane. In terms of biological role, involved in FCER1 (high affinity immunoglobulin epsilon receptor)-mediated signaling in mast cells. May also be involved in BCR (B-cell antigen receptor)-mediated signaling in B-cells and FCGR1 (high affinity immunoglobulin gamma Fc receptor I)-mediated signaling in myeloid cells. Couples activation of these receptors and their associated kinases with distal intracellular events through the recruitment of GRB2. This chain is Linker for activation of T-cells family member 2 (Lat2), found in Rattus norvegicus (Rat).